Consider the following 579-residue polypeptide: Aspartate--tRNA(Asp/Asn) ligase (579 aa).

L-aspartate is bound at residue glutamate 169. The segment at 193-196 is aspartate; that stretch reads QLFK. Arginine 215 is an L-aspartate binding site. ATP contacts are provided by residues 215–217 and glutamine 224; that span reads RDE. L-aspartate is bound at residue histidine 437. Position 471 (glutamate 471) interacts with ATP. Arginine 478 serves as a coordination point for L-aspartate. An ATP-binding site is contributed by 523-526; sequence GWDR. The segment at 551–579 is disordered; it reads DPLTGAPTPITAEQRREAGVDAVPEQATS.

It belongs to the class-II aminoacyl-tRNA synthetase family. Type 1 subfamily. Homodimer.

It localises to the cytoplasm. It carries out the reaction tRNA(Asx) + L-aspartate + ATP = L-aspartyl-tRNA(Asx) + AMP + diphosphate. Its function is as follows. Aspartyl-tRNA synthetase with relaxed tRNA specificity since it is able to aspartylate not only its cognate tRNA(Asp) but also tRNA(Asn). Reaction proceeds in two steps: L-aspartate is first activated by ATP to form Asp-AMP and then transferred to the acceptor end of tRNA(Asp/Asn). This Thermobifida fusca (strain YX) protein is Aspartate--tRNA(Asp/Asn) ligase.